A 213-amino-acid chain; its full sequence is uncharacterized protein (213 aa).

S-adenosyl-L-methionine is bound by residues glycine 53, glutamate 74, and aspartate 97.

The protein belongs to the methyltransferase superfamily. YrrT family.

Could be a S-adenosyl-L-methionine-dependent methyltransferase. This is an uncharacterized protein from Bacillus subtilis (strain 168).